We begin with the raw amino-acid sequence, 142 residues long: Succinate dehydrogenase assembly factor 2, mitochondrial (142 aa).

This sequence belongs to the SDHAF2 family. As to quaternary structure, interacts with the flavoprotein subunit within the SDH catalytic dimer.

The protein localises to the mitochondrion matrix. Plays an essential role in the assembly of succinate dehydrogenase (SDH), an enzyme complex (also referred to as respiratory complex II) that is a component of both the tricarboxylic acid (TCA) cycle and the mitochondrial electron transport chain, and which couples the oxidation of succinate to fumarate with the reduction of ubiquinone (coenzyme Q) to ubiquinol. Required for flavinylation (covalent attachment of FAD) of the flavoprotein subunit of the SDH catalytic dimer. The sequence is that of Succinate dehydrogenase assembly factor 2, mitochondrial from Debaryomyces hansenii (strain ATCC 36239 / CBS 767 / BCRC 21394 / JCM 1990 / NBRC 0083 / IGC 2968) (Yeast).